Here is a 474-residue protein sequence, read N- to C-terminus: PRAME family member 14 (474 aa).

LRR repeat units lie at residues 15–38 (QSLL…LYLP), 204–229 (LNSI…CYLK), 271–294 (LLKI…LQNP), 319–342 (LGYL…PLGA), and 391–414 (MGAL…TYPA).

It belongs to the PRAME family.

The protein is PRAME family member 14 of Homo sapiens (Human).